The following is a 273-amino-acid chain: SET domain-containing protein 9 (273 aa).

Positions 96–269 constitute an SET domain; the sequence is FSVAQATSSL…QGEELFSNYY (174 aa). Tyr268 contributes to the S-adenosyl-L-methionine binding site.

It belongs to the class V-like SAM-binding methyltransferase superfamily.

In Pongo abelii (Sumatran orangutan), this protein is SET domain-containing protein 9 (SETD9).